We begin with the raw amino-acid sequence, 764 residues long: Probable glutamate--tRNA ligase, cytoplasmic (764 aa).

L-glutamate is bound at residue 228–230 (RFP). The 'HIGH' region motif lies at 233–242 (PSGYMHIGHC). His-238 lines the ATP pocket. L-glutamate contacts are provided by residues Asp-264, 404–408 (YDFAC), and Arg-422. Residues Glu-425 and 460–464 (LLSKR) contribute to the ATP site. The 'KMSKS' region signature appears at 460–464 (LLSKR).

Belongs to the class-I aminoacyl-tRNA synthetase family. Glutamate--tRNA ligase type 2 subfamily.

Its subcellular location is the cytoplasm. It carries out the reaction tRNA(Glu) + L-glutamate + ATP = L-glutamyl-tRNA(Glu) + AMP + diphosphate. In terms of biological role, catalyzes the attachment of glutamate to tRNA(Glu) in a two-step reaction: glutamate is first activated by ATP to form Glu-AMP and then transferred to the acceptor end of tRNA(Glu). This chain is Probable glutamate--tRNA ligase, cytoplasmic (gluS), found in Dictyostelium discoideum (Social amoeba).